The following is a 344-amino-acid chain: L-rhamnose-proton symporter (344 aa).

Transmembrane regions (helical) follow at residues 4–24 (AITM…CFYA), 38–58 (WSIG…ALLL), 68–88 (FNLS…IGNI), 101–121 (MGIG…TPII), 137–157 (TLLG…AGQL), 175–195 (LLLA…MNAA), 214–234 (LPSY…FCFV), 259–279 (ILLS…YAWG), 290–310 (ISWM…GLVL), and 323–343 (VLSL…MGMA).

This sequence belongs to the L-rhamnose transporter (TC 2.A.7.6) family.

The protein resides in the cell inner membrane. It catalyses the reaction L-rhamnopyranose(in) + H(+)(in) = L-rhamnopyranose(out) + H(+)(out). In terms of biological role, uptake of L-rhamnose across the cytoplasmic membrane with the concomitant transport of protons into the cell (symport system). In Citrobacter koseri (strain ATCC BAA-895 / CDC 4225-83 / SGSC4696), this protein is L-rhamnose-proton symporter.